We begin with the raw amino-acid sequence, 138 residues long: Cyclin-dependent kinase 4 inhibitor B (138 aa).

Residues 13-39 (GSDEGLASAAARGLVEKVRQLLEAGAD) form an ANK 1; truncated repeat. 3 ANK repeats span residues 46–74 (FGRRAIQVMMMGSARVAELLLLHGAEPNC), 79–108 (TLTRPVHDAAREGFLDTLVVLHRAGARLDV), and 112–138 (WGRLPVDLAEERGHRDVAGYLRTATGD).

It belongs to the CDKN2 cyclin-dependent kinase inhibitor family. Heterodimer of CDKN2B with CDK4 or CDK6. Isoform 2 does not interact with CDK4 nor CDK6. Isoform 2 is expressed in normal (keratinocytes, fibroblasts) and tumor cell lines.

The protein resides in the cytoplasm. In terms of biological role, interacts strongly with CDK4 and CDK6. Potent inhibitor. Potential effector of TGF-beta induced cell cycle arrest. This Homo sapiens (Human) protein is Cyclin-dependent kinase 4 inhibitor B (CDKN2B).